The primary structure comprises 248 residues: Metallo-beta-lactamase type 2 (248 aa).

Positions 1 to 21 (MKRLKGLLVLALGFTGLQVFG) are cleaved as a signal peptide. Zn(2+) contacts are provided by His-97, His-99, Asp-101, His-160, and Cys-179. Lys-182 lines the substrate pocket. His-221 contributes to the Zn(2+) binding site.

Belongs to the metallo-beta-lactamase superfamily. Class-B beta-lactamase family. Monomer. The cofactor is Zn(2+).

It is found in the periplasm. The catalysed reaction is a beta-lactam + H2O = a substituted beta-amino acid. In terms of biological role, confers resistance to the different beta-lactams antibiotics (penicillin, cephalosporin and carbapenem) via the hydrolysis of the beta-lactam ring. The sequence is that of Metallo-beta-lactamase type 2 (blaB6) from Elizabethkingia meningoseptica (Chryseobacterium meningosepticum).